We begin with the raw amino-acid sequence, 85 residues long: Antitoxin VapB4 (85 aa).

It belongs to the phD/YefM antitoxin family. Interacts with cognate toxin VapC4.

Antitoxin component of a type II toxin-antitoxin (TA) system. Antitoxin that counteracts the effect of the VapC4 toxin. The sequence is that of Antitoxin VapB4 (vapB4) from Mycobacterium tuberculosis (strain CDC 1551 / Oshkosh).